The sequence spans 71 residues: uncharacterized protein (71 aa).

This is an uncharacterized protein from Methanocaldococcus jannaschii (strain ATCC 43067 / DSM 2661 / JAL-1 / JCM 10045 / NBRC 100440) (Methanococcus jannaschii).